We begin with the raw amino-acid sequence, 473 residues long: Photosystem II CP43 reaction center protein (473 aa).

Residues 1 to 14 (MKILYSPRRFYPVE) constitute a propeptide that is removed on maturation. Residue threonine 15 is modified to N-acetylthreonine. Threonine 15 is modified (phosphothreonine). The next 5 helical transmembrane spans lie at 69–93 (LFEVAHFVPEKPMYEQGLILLPHLA), 134–155 (IIGPETLEESFPFFGYAWKDKN), 178–200 (KALYFGGVYDTWAPGGGDVRKIT), 255–275 (KPFAWARRAFVWSGEAYLSYS), and 291–312 (WFNNTAYPSEFYGPTGPEASQA). Glutamate 367 serves as a coordination point for [CaMn4O5] cluster. Residues 447 to 471 (RARAAAAGFEKGIDRDFEPVLSTTP) traverse the membrane as a helical segment.

Belongs to the PsbB/PsbC family. PsbC subfamily. As to quaternary structure, PSII is composed of 1 copy each of membrane proteins PsbA, PsbB, PsbC, PsbD, PsbE, PsbF, PsbH, PsbI, PsbJ, PsbK, PsbL, PsbM, PsbT, PsbX, PsbY, PsbZ, Psb30/Ycf12, at least 3 peripheral proteins of the oxygen-evolving complex and a large number of cofactors. It forms dimeric complexes. The cofactor is Binds multiple chlorophylls and provides some of the ligands for the Ca-4Mn-5O cluster of the oxygen-evolving complex. It may also provide a ligand for a Cl- that is required for oxygen evolution. PSII binds additional chlorophylls, carotenoids and specific lipids..

It is found in the plastid. It localises to the chloroplast thylakoid membrane. One of the components of the core complex of photosystem II (PSII). It binds chlorophyll and helps catalyze the primary light-induced photochemical processes of PSII. PSII is a light-driven water:plastoquinone oxidoreductase, using light energy to abstract electrons from H(2)O, generating O(2) and a proton gradient subsequently used for ATP formation. The polypeptide is Photosystem II CP43 reaction center protein (Huperzia lucidula (Shining clubmoss)).